The following is a 129-amino-acid chain: uncharacterized protein (129 aa).

The protein belongs to the asfivirus C129R family.

It is found in the virion. Its function is as follows. Plays a role in the inhibition of type I interferon signaling pathway. Mechanistically, specifically interacts with 2',3'-cGAMP and cleaves it via its phosphodiesterase activity. In turn, prevents 2',3'-cGAMP interaction with host ER-resident STING1 leading to inhibition of downstream signaling pathway and type I interferon production. This is an uncharacterized protein from Ornithodoros (relapsing fever ticks).